The following is a 316-amino-acid chain: MQEFSLWCDFIERDFLENDFLKLINKGAICGATSNPSLFCEAITKSAFYQDEIAKLKGKKAKEIYETLALKDILQASSALMPLYEKDPNNGYISLEIDPFLEDDAIKSIDEAKRLFKTLNRPNVMIKVPASESGLEVISALAQASIPINVTLVFSPKIAGEIAQILAKEAQKRAVISVFVSRFDKEIDPLAPQNLQAQSGIMNATECYYQINQHANKLISALFASTGVKSNALAKDYYIKALCFKNSINTAPLEALNAYLLDPNTEYQTPLKITEIEAFKKELKAHNIDLENTAQKLLKEGLIAFKQSFEKLLSSF.

Lysine 127 serves as the catalytic Schiff-base intermediate with substrate.

The protein belongs to the transaldolase family. Type 2 subfamily.

The protein resides in the cytoplasm. It carries out the reaction D-sedoheptulose 7-phosphate + D-glyceraldehyde 3-phosphate = D-erythrose 4-phosphate + beta-D-fructose 6-phosphate. Its pathway is carbohydrate degradation; pentose phosphate pathway; D-glyceraldehyde 3-phosphate and beta-D-fructose 6-phosphate from D-ribose 5-phosphate and D-xylulose 5-phosphate (non-oxidative stage): step 2/3. In terms of biological role, transaldolase is important for the balance of metabolites in the pentose-phosphate pathway. The sequence is that of Transaldolase from Helicobacter pylori (strain HPAG1).